Reading from the N-terminus, the 362-residue chain is C-C chemokine receptor type 10 (362 aa).

At 1–48 (MGTKPTEQVSWGLYSGYDEEAYSVGPLPELCYKADVQAFSRAFQPSVS) the chain is on the extracellular side. Residues 49-69 (LMVAVLGLAGNGLVLATHLAA) form a helical membrane-spanning segment. The Cytoplasmic portion of the chain corresponds to 70–80 (RRTTRSPTSVH). A helical transmembrane segment spans residues 81–101 (LLQLALADLLLALTLPFAAAG). Over 102–115 (ALQGWNLGSTTCRA) the chain is Extracellular. Residues Cys-113 and Cys-191 are joined by a disulfide bond. The chain crosses the membrane as a helical span at residues 116–136 (ISGLYSASFHAGFLFLACISA). The Cytoplasmic segment spans residues 137–159 (DRYVAIARALPAGQRPSTPSRAH). Residues 160-180 (LVSVFVWLLSLFLALPALLFS) form a helical membrane-spanning segment. Residues 181 to 208 (RDGPREGQRRCRLIFPESLTQTVKGASA) are Extracellular-facing. The chain crosses the membrane as a helical span at residues 209 to 229 (VAQVVLGFALPLGVMAACYAL). Residues 230–247 (LGRTLLAARGPERRRALR) are Cytoplasmic-facing. Residues 248 to 268 (VVVALVVAFVVLQLPYSLALL) form a helical membrane-spanning segment. At 269–291 (LDTADLLAARERSCSSSKRKDLA) the chain is on the extracellular side. A helical transmembrane segment spans residues 292 to 312 (LLVTGGLTLVRCSLNPVLYAF). Residues 313–362 (LGLRFRRDLRRLLQGGGCSPKPNPRGRCPRRLRLSSCSAPTETHSLSWDN) are Cytoplasmic-facing.

It belongs to the G-protein coupled receptor 1 family. As to expression, expressed at high levels in small intestine, colon, lymph nodes, Peyer patches and at lower levels in thymus, lung and spleen.

The protein resides in the cell membrane. Functionally, receptor for chemokines SCYA27 and SCYA28. Subsequently transduces a signal by increasing the intracellular calcium ions level. The chain is C-C chemokine receptor type 10 (Ccr10) from Mus musculus (Mouse).